Reading from the N-terminus, the 1143-residue chain is FH2 domain-containing protein 1 (1143 aa).

Positions 16–89 are disordered; that stretch reads GNIATAPGFM…PPTTHMNGYS (74 aa). Pro residues-rich tracts occupy residues 29 to 46 and 56 to 80; these read TPPPAPPPPPPPPPPSPP and SSPPPPPPPPLPGEPPIPPPPPGLP. The FH2 domain occupies 87 to 482; the sequence is GYSHLGKKKR…QLQRLKEQEQ (396 aa). Ser-500 bears the Phosphoserine mark. The tract at residues 517–638 is disordered; the sequence is PFLHPRPISP…NHASAFPRAR (122 aa). A compositionally biased stretch (low complexity) spans 521–534; sequence PRPISPSSPSYRPP. Phosphoserine occurs at positions 650, 660, and 664. Residues 706 to 1143 are disordered; sequence LESVGHRGPQ…LGRILNPLRK (438 aa). Residues 806 to 818 are compositionally biased toward low complexity; it reads GSMSSGVGEMGDS. The segment covering 848–861 has biased composition (basic and acidic residues); sequence LPRDKPTKRKDVVA. A compositionally biased stretch (polar residues) spans 925–947; that stretch reads RGPSQNPPSSTDTVWSRQNSVRR. Residues 958–968 show a composition bias toward low complexity; it reads PRGSSGSSSTR. Residues 960-1086 form an MTBD; microtubule-binding domain region; that stretch reads GSSGSSSTRP…DAAPKDSSTL (127 aa). Over residues 995 to 1018 the composition is skewed to basic and acidic residues; it reads QKPEENKTCRAHSEGPESPKEEPK. The span at 1036–1046 shows a compositional bias: polar residues; that stretch reads ARNTVASSSRS. Basic and acidic residues-rich tracts occupy residues 1071 to 1080 and 1117 to 1130; these read VKGDPEDAAP and GAGERASLRRKDSS.

Interacts with CEP170.

It localises to the cell projection. The protein resides in the cilium. Its subcellular location is the golgi apparatus. Its function is as follows. Microtubule-associated formin which regulates both actin and microtubule dynamics. Induces microtubule acetylation and stabilization and actin stress fiber formation. Regulates Golgi ribbon formation. Required for normal cilia assembly. Early in cilia assembly, may assist in the maturation and positioning of the centrosome/basal body, and once cilia assembly has initiated, may also promote cilia elongation by inhibiting disassembly. The polypeptide is FH2 domain-containing protein 1 (FHDC1) (Homo sapiens (Human)).